An 863-amino-acid chain; its full sequence is Penicillin-binding protein 1A (863 aa).

The Cytoplasmic segment spans residues 1–28 (MTENRDNKTSQSEKTTQKKKKKKFKAFK). The chain crosses the membrane as a helical; Signal-anchor for type II membrane protein span at residues 29–49 (IILITFITLIVISLVTAIGIT). Topologically, residues 50–863 (LAIIKTSPDI…KPIIRPKKHF (814 aa)) are extracellular. The interval 71–248 (SKIYDDKGEL…PSVYYPYSRT (178 aa)) is transglycosylase. The active-site Proton donor; for transglycosylase activity is the Glu110. The tract at residues 392–674 (ASAVLTDYHT…AAALFGKIMN (283 aa)) is transpeptidase. The active-site Acyl-ester intermediate; for transpeptidase activity is Ser431. The segment at 774–863 (DDDMYVLPDK…KPIIRPKKHF (90 aa)) is disordered. A compositionally biased stretch (polar residues) spans 808–836 (EDATNEASTEPSPNTDTVPEDSTNNLDPT). Residues 837–846 (KNTEKKPSDK) are compositionally biased toward basic and acidic residues. Over residues 847–863 (KNKKHVIKPIIRPKKHF) the composition is skewed to basic residues.

This sequence in the N-terminal section; belongs to the glycosyltransferase 51 family. It in the C-terminal section; belongs to the transpeptidase family.

It is found in the cell membrane. The catalysed reaction is [GlcNAc-(1-&gt;4)-Mur2Ac(oyl-L-Ala-gamma-D-Glu-L-Lys-D-Ala-D-Ala)](n)-di-trans,octa-cis-undecaprenyl diphosphate + beta-D-GlcNAc-(1-&gt;4)-Mur2Ac(oyl-L-Ala-gamma-D-Glu-L-Lys-D-Ala-D-Ala)-di-trans,octa-cis-undecaprenyl diphosphate = [GlcNAc-(1-&gt;4)-Mur2Ac(oyl-L-Ala-gamma-D-Glu-L-Lys-D-Ala-D-Ala)](n+1)-di-trans,octa-cis-undecaprenyl diphosphate + di-trans,octa-cis-undecaprenyl diphosphate + H(+). It carries out the reaction Preferential cleavage: (Ac)2-L-Lys-D-Ala-|-D-Ala. Also transpeptidation of peptidyl-alanyl moieties that are N-acyl substituents of D-alanine.. Its pathway is cell wall biogenesis; peptidoglycan biosynthesis. Functionally, cell wall formation. Synthesis of cross-linked peptidoglycan from the lipid intermediates. The enzyme has a penicillin-insensitive transglycosylase N-terminal domain (formation of linear glycan strands) and a penicillin-sensitive transpeptidase C-terminal domain (cross-linking of the peptide subunits). This chain is Penicillin-binding protein 1A (pbpA), found in Clostridium novyi (strain NT).